Reading from the N-terminus, the 831-residue chain is Vi polysaccharide biosynthesis protein TviD (831 aa).

It functions in the pathway glycan metabolism; Vi-antigen biosynthesis. It participates in capsule biogenesis; capsule polysaccharide biosynthesis. In terms of biological role, may be required for maturation of the Vi polysaccharide. This Salmonella typhi protein is Vi polysaccharide biosynthesis protein TviD (tviD).